The primary structure comprises 107 residues: Serine-rich and transmembrane domain-containing protein 1 (107 aa).

The helical transmembrane segment at 43–63 threads the bilayer; the sequence is IYVSIFLSLLAFLLLLLIIAL.

The protein localises to the membrane. In Mus musculus (Mouse), this protein is Serine-rich and transmembrane domain-containing protein 1 (Sertm1).